We begin with the raw amino-acid sequence, 380 residues long: UDP-N-acetylglucosamine--N-acetylmuramyl-(pentapeptide) pyrophosphoryl-undecaprenol N-acetylglucosamine transferase (380 aa).

UDP-N-acetyl-alpha-D-glucosamine-binding positions include 23–25 (TGG), asparagine 137, arginine 178, serine 210, isoleucine 266, and glutamine 311.

It belongs to the glycosyltransferase 28 family. MurG subfamily.

The protein localises to the cell inner membrane. It carries out the reaction di-trans,octa-cis-undecaprenyl diphospho-N-acetyl-alpha-D-muramoyl-L-alanyl-D-glutamyl-meso-2,6-diaminopimeloyl-D-alanyl-D-alanine + UDP-N-acetyl-alpha-D-glucosamine = di-trans,octa-cis-undecaprenyl diphospho-[N-acetyl-alpha-D-glucosaminyl-(1-&gt;4)]-N-acetyl-alpha-D-muramoyl-L-alanyl-D-glutamyl-meso-2,6-diaminopimeloyl-D-alanyl-D-alanine + UDP + H(+). Its pathway is cell wall biogenesis; peptidoglycan biosynthesis. Its function is as follows. Cell wall formation. Catalyzes the transfer of a GlcNAc subunit on undecaprenyl-pyrophosphoryl-MurNAc-pentapeptide (lipid intermediate I) to form undecaprenyl-pyrophosphoryl-MurNAc-(pentapeptide)GlcNAc (lipid intermediate II). This is UDP-N-acetylglucosamine--N-acetylmuramyl-(pentapeptide) pyrophosphoryl-undecaprenol N-acetylglucosamine transferase from Bacteroides fragilis (strain ATCC 25285 / DSM 2151 / CCUG 4856 / JCM 11019 / LMG 10263 / NCTC 9343 / Onslow / VPI 2553 / EN-2).